Reading from the N-terminus, the 331-residue chain is Ketol-acid reductoisomerase (NADP(+)) (331 aa).

Positions 2–182 (ARMYYDSDAN…GGTRAGILET (181 aa)) constitute a KARI N-terminal Rossmann domain. NADP(+) is bound by residues 25-28 (YGSQ), S51, S53, and 83-86 (DEVQ). H108 is an active-site residue. G134 serves as a coordination point for NADP(+). The region spanning 183-328 (TFREETETDL…KDLRAMFSWL (146 aa)) is the KARI C-terminal knotted domain. The Mg(2+) site is built by D191, E195, E227, and E231. S252 contacts substrate.

Belongs to the ketol-acid reductoisomerase family. Requires Mg(2+) as cofactor.

It catalyses the reaction (2R)-2,3-dihydroxy-3-methylbutanoate + NADP(+) = (2S)-2-acetolactate + NADPH + H(+). It carries out the reaction (2R,3R)-2,3-dihydroxy-3-methylpentanoate + NADP(+) = (S)-2-ethyl-2-hydroxy-3-oxobutanoate + NADPH + H(+). The protein operates within amino-acid biosynthesis; L-isoleucine biosynthesis; L-isoleucine from 2-oxobutanoate: step 2/4. Its pathway is amino-acid biosynthesis; L-valine biosynthesis; L-valine from pyruvate: step 2/4. Functionally, involved in the biosynthesis of branched-chain amino acids (BCAA). Catalyzes an alkyl-migration followed by a ketol-acid reduction of (S)-2-acetolactate (S2AL) to yield (R)-2,3-dihydroxy-isovalerate. In the isomerase reaction, S2AL is rearranged via a Mg-dependent methyl migration to produce 3-hydroxy-3-methyl-2-ketobutyrate (HMKB). In the reductase reaction, this 2-ketoacid undergoes a metal-dependent reduction by NADPH to yield (R)-2,3-dihydroxy-isovalerate. The polypeptide is Ketol-acid reductoisomerase (NADP(+)) (Trichodesmium erythraeum (strain IMS101)).